The chain runs to 881 residues: Putative outer membrane usher protein YfcU (881 aa).

The signal sequence occupies residues 1–29 (MPDHSLFRLRILPWCIALAMSGSYSSVWA).

This sequence belongs to the fimbrial export usher family.

It is found in the cell outer membrane. Its function is as follows. Part of the yfcOPQRSUV fimbrial operon. Could contribute to adhesion to various surfaces in specific environmental niches. Increases adhesion to eukaryotic T24 bladder epithelial cells in the absence of fim genes. Probably involved in the export and assembly of fimbrial subunits across the outer membrane. This Escherichia coli (strain K12) protein is Putative outer membrane usher protein YfcU (yfcU).